A 219-amino-acid chain; its full sequence is MKISSFISTSLPLPTSVSGSSSVGEMSGRSVSQQTSDQYANNLAGRTESPQGSSLASRIIERLSSVAHSVIGFIQRMFSEGSHKPVVTPAPTPAQMPSPTSFSDSIKQLAAETLPKYMQQLNSLDAEMLQKNHDQFATGSGPLRGSITQCQGLMQFCGGELQAEASAILNTPVCGIPFSQWGTIGGAASAYVASGVDLTQAANEIKGLAQQMQKLLSLM.

Residues 1–37 (MKISSFISTSLPLPTSVSGSSSVGEMSGRSVSQQTSD) are disordered. Low complexity predominate over residues 8 to 32 (STSLPLPTSVSGSSSVGEMSGRSVS). Residues 101-219 (SFSDSIKQLA…QQMQKLLSLM (119 aa)) enclose the Bacterial Rho-GAP domain.

Belongs to the YopE family.

The protein resides in the cell outer membrane. Essential virulence determinant; cytotoxic effector, involved in resistance to phagocytosis. This Yersinia pestis protein is Outer membrane virulence protein YopE (yopE).